A 211-amino-acid chain; its full sequence is C-type lectin domain-containing protein 158 (211 aa).

Residues 1 to 16 (MQKFILSAFVVALVAA) form the signal peptide.

The sequence is that of C-type lectin domain-containing protein 158 (clec-158) from Caenorhabditis elegans.